A 325-amino-acid chain; its full sequence is Tryptophan--tRNA ligase (325 aa).

ATP is bound by residues 9–11 (QPS) and 17–18 (GN). A 'HIGH' region motif is present at residues 10 to 18 (PSGILHIGN). Asp132 serves as a coordination point for L-tryptophan. ATP-binding positions include 144–146 (GKD), Val184, and 191–195 (KMSKS). Positions 191–195 (KMSKS) match the 'KMSKS' region motif.

The protein belongs to the class-I aminoacyl-tRNA synthetase family. As to quaternary structure, homodimer.

Its subcellular location is the cytoplasm. The enzyme catalyses tRNA(Trp) + L-tryptophan + ATP = L-tryptophyl-tRNA(Trp) + AMP + diphosphate + H(+). Its function is as follows. Catalyzes the attachment of tryptophan to tRNA(Trp). This chain is Tryptophan--tRNA ligase, found in Fusobacterium nucleatum subsp. nucleatum (strain ATCC 25586 / DSM 15643 / BCRC 10681 / CIP 101130 / JCM 8532 / KCTC 2640 / LMG 13131 / VPI 4355).